The sequence spans 135 residues: ATP synthase epsilon chain (135 aa).

It belongs to the ATPase epsilon chain family. In terms of assembly, F-type ATPases have 2 components, CF(1) - the catalytic core - and CF(0) - the membrane proton channel. CF(1) has five subunits: alpha(3), beta(3), gamma(1), delta(1), epsilon(1). CF(0) has three main subunits: a, b and c.

It localises to the cellular thylakoid membrane. Functionally, produces ATP from ADP in the presence of a proton gradient across the membrane. The sequence is that of ATP synthase epsilon chain from Prochlorococcus marinus (strain NATL1A).